Reading from the N-terminus, the 109-residue chain is Large ribosomal subunit protein uL22 (109 aa).

This sequence belongs to the universal ribosomal protein uL22 family. In terms of assembly, part of the 50S ribosomal subunit.

In terms of biological role, this protein binds specifically to 23S rRNA; its binding is stimulated by other ribosomal proteins, e.g. L4, L17, and L20. It is important during the early stages of 50S assembly. It makes multiple contacts with different domains of the 23S rRNA in the assembled 50S subunit and ribosome. Functionally, the globular domain of the protein is located near the polypeptide exit tunnel on the outside of the subunit, while an extended beta-hairpin is found that lines the wall of the exit tunnel in the center of the 70S ribosome. This is Large ribosomal subunit protein uL22 from Chromobacterium violaceum (strain ATCC 12472 / DSM 30191 / JCM 1249 / CCUG 213 / NBRC 12614 / NCIMB 9131 / NCTC 9757 / MK).